Consider the following 178-residue polypeptide: GTP-dependent dephospho-CoA kinase (178 aa).

Asp43, Ile44, Val45, Asp62, Lys64, and Glu120 together coordinate GTP.

The protein belongs to the GTP-dependent DPCK family.

The catalysed reaction is 3'-dephospho-CoA + GTP = GDP + CoA + H(+). It functions in the pathway cofactor biosynthesis; coenzyme A biosynthesis. Its function is as follows. Catalyzes the GTP-dependent phosphorylation of the 3'-hydroxyl group of dephosphocoenzyme A to form coenzyme A (CoA). The polypeptide is GTP-dependent dephospho-CoA kinase (Natronomonas pharaonis (strain ATCC 35678 / DSM 2160 / CIP 103997 / JCM 8858 / NBRC 14720 / NCIMB 2260 / Gabara) (Halobacterium pharaonis)).